The chain runs to 338 residues: Anthranilate phosphoribosyltransferase (338 aa).

Residues glycine 81, 84–85 (GD), threonine 89, 91–94 (NIST), 109–117 (KHGNRALSS), and alanine 121 each bind 5-phospho-alpha-D-ribose 1-diphosphate. Glycine 81 is a binding site for anthranilate. Serine 93 contacts Mg(2+). Asparagine 112 is a binding site for anthranilate. Arginine 167 contacts anthranilate. Residues aspartate 225 and glutamate 226 each coordinate Mg(2+).

The protein belongs to the anthranilate phosphoribosyltransferase family. As to quaternary structure, homodimer. Mg(2+) serves as cofactor.

The enzyme catalyses N-(5-phospho-beta-D-ribosyl)anthranilate + diphosphate = 5-phospho-alpha-D-ribose 1-diphosphate + anthranilate. It functions in the pathway amino-acid biosynthesis; L-tryptophan biosynthesis; L-tryptophan from chorismate: step 2/5. Its function is as follows. Catalyzes the transfer of the phosphoribosyl group of 5-phosphorylribose-1-pyrophosphate (PRPP) to anthranilate to yield N-(5'-phosphoribosyl)-anthranilate (PRA). This Rhizobium johnstonii (strain DSM 114642 / LMG 32736 / 3841) (Rhizobium leguminosarum bv. viciae) protein is Anthranilate phosphoribosyltransferase.